A 120-amino-acid polypeptide reads, in one-letter code: Putative iron-sulfur cluster insertion protein ErpA (120 aa).

Iron-sulfur cluster is bound by residues cysteine 49, cysteine 113, and cysteine 115.

It belongs to the HesB/IscA family. In terms of assembly, homodimer. Iron-sulfur cluster serves as cofactor.

Its function is as follows. Required for insertion of 4Fe-4S clusters. In Albidiferax ferrireducens (strain ATCC BAA-621 / DSM 15236 / T118) (Rhodoferax ferrireducens), this protein is Putative iron-sulfur cluster insertion protein ErpA.